A 365-amino-acid polypeptide reads, in one-letter code: DNA repair protein rhp51 (365 aa).

The disordered stretch occupies residues 1-25 (MADTEVEMQVSAADTNNNENGQAQS). Polar residues predominate over residues 12–25 (AADTNNNENGQAQS). ATP is bound at residue 149–156 (GEFRTGKS).

It belongs to the RecA family. RAD51 subfamily. Interacts with rad22, rad54, rdh54, rhp54, rti1, swi2 and swi5. Forms homooiligomers.

The protein localises to the nucleus. Its function is as follows. Required both for recombination and for the repair of DNA damage caused by X-rays. Binds to single and double-stranded DNA, in the presence of magnesium, and exhibits DNA-dependent ATPase activity. Promotes DNA strand annealing and strand exchange via DNA recombinase activity and forms helical nucleoprotein filaments. The sequence is that of DNA repair protein rhp51 (rhp51) from Schizosaccharomyces pombe (strain 972 / ATCC 24843) (Fission yeast).